The primary structure comprises 165 residues: NAD(P)H-quinone oxidoreductase subunit I, chloroplastic (165 aa).

4Fe-4S ferredoxin-type domains lie at 55–84 (GRIH…VDWE) and 95–124 (KSYS…MTEE). Positions 64, 67, 70, 74, 104, 107, 110, and 114 each coordinate [4Fe-4S] cluster.

It belongs to the complex I 23 kDa subunit family. In terms of assembly, NDH is composed of at least 16 different subunits, 5 of which are encoded in the nucleus. [4Fe-4S] cluster is required as a cofactor.

It is found in the plastid. It localises to the chloroplast thylakoid membrane. It catalyses the reaction a plastoquinone + NADH + (n+1) H(+)(in) = a plastoquinol + NAD(+) + n H(+)(out). It carries out the reaction a plastoquinone + NADPH + (n+1) H(+)(in) = a plastoquinol + NADP(+) + n H(+)(out). NDH shuttles electrons from NAD(P)H:plastoquinone, via FMN and iron-sulfur (Fe-S) centers, to quinones in the photosynthetic chain and possibly in a chloroplast respiratory chain. The immediate electron acceptor for the enzyme in this species is believed to be plastoquinone. Couples the redox reaction to proton translocation, and thus conserves the redox energy in a proton gradient. The sequence is that of NAD(P)H-quinone oxidoreductase subunit I, chloroplastic from Psilotum nudum (Whisk fern).